The following is a 253-amino-acid chain: Adenosylcobinamide-GDP ribazoletransferase (253 aa).

7 helical membrane-spanning segments follow: residues 33-53, 56-76, 106-126, 132-152, 178-198, 209-229, and 233-253; these read ISPL…YVLL, ILEA…RGFN, IGSG…VALL, FYTI…GLYI, VLLF…FLVF, LGGS…PLFL, and EITN…LYLH.

The protein belongs to the CobS family. It depends on Mg(2+) as a cofactor.

Its subcellular location is the cell membrane. The enzyme catalyses alpha-ribazole + adenosylcob(III)inamide-GDP = adenosylcob(III)alamin + GMP + H(+). It carries out the reaction alpha-ribazole 5'-phosphate + adenosylcob(III)inamide-GDP = adenosylcob(III)alamin 5'-phosphate + GMP + H(+). It functions in the pathway cofactor biosynthesis; adenosylcobalamin biosynthesis; adenosylcobalamin from cob(II)yrinate a,c-diamide: step 7/7. Its function is as follows. Joins adenosylcobinamide-GDP and alpha-ribazole to generate adenosylcobalamin (Ado-cobalamin). Also synthesizes adenosylcobalamin 5'-phosphate from adenosylcobinamide-GDP and alpha-ribazole 5'-phosphate. In Saccharolobus islandicus (strain M.16.27) (Sulfolobus islandicus), this protein is Adenosylcobinamide-GDP ribazoletransferase.